Here is a 661-residue protein sequence, read N- to C-terminus: tRNA uridine 5-carboxymethylaminomethyl modification enzyme MnmG (661 aa).

13–18 (GGGHAG) serves as a coordination point for FAD. NAD(+) is bound at residue 285–299 (GPRYCPSVEDKINRF).

Belongs to the MnmG family. In terms of assembly, homodimer. Heterotetramer of two MnmE and two MnmG subunits. FAD serves as cofactor.

Its subcellular location is the cytoplasm. Its function is as follows. NAD-binding protein involved in the addition of a carboxymethylaminomethyl (cmnm) group at the wobble position (U34) of certain tRNAs, forming tRNA-cmnm(5)s(2)U34. This chain is tRNA uridine 5-carboxymethylaminomethyl modification enzyme MnmG, found in Acidovorax sp. (strain JS42).